The chain runs to 141 residues: Large ribosomal subunit protein uL16 (141 aa).

Belongs to the universal ribosomal protein uL16 family. As to quaternary structure, part of the 50S ribosomal subunit.

Binds 23S rRNA and is also seen to make contacts with the A and possibly P site tRNAs. In Campylobacter concisus (strain 13826), this protein is Large ribosomal subunit protein uL16.